Reading from the N-terminus, the 145-residue chain is D-aminoacyl-tRNA deacylase (145 aa).

Residues 137-138 carry the Gly-cisPro motif, important for rejection of L-amino acids motif; sequence GP.

The protein belongs to the DTD family. Homodimer.

It is found in the cytoplasm. The catalysed reaction is glycyl-tRNA(Ala) + H2O = tRNA(Ala) + glycine + H(+). It catalyses the reaction a D-aminoacyl-tRNA + H2O = a tRNA + a D-alpha-amino acid + H(+). An aminoacyl-tRNA editing enzyme that deacylates mischarged D-aminoacyl-tRNAs. Also deacylates mischarged glycyl-tRNA(Ala), protecting cells against glycine mischarging by AlaRS. Acts via tRNA-based rather than protein-based catalysis; rejects L-amino acids rather than detecting D-amino acids in the active site. By recycling D-aminoacyl-tRNA to D-amino acids and free tRNA molecules, this enzyme counteracts the toxicity associated with the formation of D-aminoacyl-tRNA entities in vivo and helps enforce protein L-homochirality. In Cronobacter sakazakii (strain ATCC BAA-894) (Enterobacter sakazakii), this protein is D-aminoacyl-tRNA deacylase.